The following is a 215-amino-acid chain: MEKFTVYKGLVAPLNRENVDTDAIIPKQFLKSIKKTGFGQNLFDEWRYLDHGEPGQDCSTRPINPDFVLNQPRYKGAGILLARKNFGCGSSREHAPWALDQFGFRAVIAPSFADIFYSNCFKNGVLPIVLTEVQVDHLFNETQAFNGYQLTIDLEAQQVIAPDGTAYNFDVAPFRKYCLLNGLDDIGLTLQHADKIKAYEAERILKMSWLATQLP.

The protein belongs to the LeuD family. LeuD type 1 subfamily. As to quaternary structure, heterodimer of LeuC and LeuD.

It carries out the reaction (2R,3S)-3-isopropylmalate = (2S)-2-isopropylmalate. It functions in the pathway amino-acid biosynthesis; L-leucine biosynthesis; L-leucine from 3-methyl-2-oxobutanoate: step 2/4. Its function is as follows. Catalyzes the isomerization between 2-isopropylmalate and 3-isopropylmalate, via the formation of 2-isopropylmaleate. The polypeptide is 3-isopropylmalate dehydratase small subunit (Polynucleobacter necessarius subsp. necessarius (strain STIR1)).